Here is a 174-residue protein sequence, read N- to C-terminus: MPAQRKLGRPTDQRKAVLKSLVTALFQNGKIETTEAKAKEVKNIAEKLIAIAVKECDNFTSKQVKVSAAKLDSKGNKITNTKKSKNGNEYLVVEREIKTDMQRVDNPSRLHARRKVMSWLYRVKDSEGNTINLANKLFDEIAPKYRDVQGGYTRMYRIGPRKGDAAEMVILQLV.

It belongs to the bacterial ribosomal protein bL17 family. In terms of assembly, part of the 50S ribosomal subunit. Contacts protein L32.

This is Large ribosomal subunit protein bL17 from Acetivibrio thermocellus (strain ATCC 27405 / DSM 1237 / JCM 9322 / NBRC 103400 / NCIMB 10682 / NRRL B-4536 / VPI 7372) (Clostridium thermocellum).